The following is a 169-amino-acid chain: DNA damage-inducible transcript 3 protein (169 aa).

The interval 10 to 18 (FGTLSSWEL) is interaction with TRIB3. The interval 10–26 (FGTLSSWELEAWYEDLQ) is N-terminal. S14, S15, S30, and S31 each carry phosphoserine; by CK2. Residues 32-139 (DENGGTYVSP…KVAQLAEENE (108 aa)) are disordered. The span at 74-89 (TSTSQSPHSPDSSQSS) shows a compositional bias: low complexity. Phosphoserine; by MAPK14 occurs at positions 79 and 82. One can recognise a bZIP domain in the interval 99 to 162 (QGRTRKRKQS…EATRRALIDR (64 aa)). The segment at 101-130 (RTRKRKQSGHSPARAGKQRMKEKEQENERK) is basic motif. Basic and acidic residues predominate over residues 119–139 (RMKEKEQENERKVAQLAEENE). A leucine-zipper region spans residues 134–148 (LAEENERLKQEIERL).

Belongs to the bZIP family. In terms of assembly, heterodimer. Interacts with TCF7L2/TCF4, EP300/P300, HDAC1, HDAC5 and HDAC6. Interacts with TRIB3 which blocks its association with EP300/P300. Interacts with FOXO3, CEBPB and ATF4. Interacts with isoform AltDDIT3 of DDIT3. Ubiquitinated, leading to its degradation by the proteasome. Post-translationally, phosphorylation at serine residues by MAPK14 enhances its transcriptional activation activity while phosphorylation at serine residues by CK2 inhibits its transcriptional activation activity.

The protein resides in the cytoplasm. It localises to the nucleus. In terms of biological role, multifunctional transcription factor in endoplasmic reticulum (ER) stress response. Plays an essential role in the response to a wide variety of cell stresses and induces cell cycle arrest and apoptosis in response to ER stress. Plays a dual role both as an inhibitor of CCAAT/enhancer-binding protein (C/EBP) function and as an activator of other genes. Acts as a dominant-negative regulator of C/EBP-induced transcription: dimerizes with members of the C/EBP family, impairs their association with C/EBP binding sites in the promoter regions, and inhibits the expression of C/EBP regulated genes. Positively regulates the transcription of TRIB3, IL6, IL8, IL23, TNFRSF10B/DR5, PPP1R15A/GADD34, BBC3/PUMA, BCL2L11/BIM and ERO1L. Negatively regulates; expression of BCL2 and MYOD1, ATF4-dependent transcriptional activation of asparagine synthetase (ASNS), CEBPA-dependent transcriptional activation of hepcidin (HAMP) and CEBPB-mediated expression of peroxisome proliferator-activated receptor gamma (PPARG). Together with ATF4, mediates ER-mediated cell death by promoting expression of genes involved in cellular amino acid metabolic processes, mRNA translation and the unfolded protein response (UPR) in response to ER stress. Inhibits the canonical Wnt signaling pathway by binding to TCF7L2/TCF4, impairing its DNA-binding properties and repressing its transcriptional activity. Plays a regulatory role in the inflammatory response through the induction of caspase-11 (CASP4/CASP11) which induces the activation of caspase-1 (CASP1) and both these caspases increase the activation of pro-IL1B to mature IL1B which is involved in the inflammatory response. Acts as a major regulator of postnatal neovascularization through regulation of endothelial nitric oxide synthase (NOS3)-related signaling. The sequence is that of DNA damage-inducible transcript 3 protein (DDIT3) from Homo sapiens (Human).